The primary structure comprises 117 residues: Large ribosomal subunit protein bL20 (117 aa).

The protein belongs to the bacterial ribosomal protein bL20 family.

Functionally, binds directly to 23S ribosomal RNA and is necessary for the in vitro assembly process of the 50S ribosomal subunit. It is not involved in the protein synthesizing functions of that subunit. This is Large ribosomal subunit protein bL20 from Roseiflexus castenholzii (strain DSM 13941 / HLO8).